A 474-amino-acid polypeptide reads, in one-letter code: 3-isopropylmalate dehydratase large subunit (474 aa).

3 residues coordinate [4Fe-4S] cluster: Cys-352, Cys-413, and Cys-416.

Belongs to the aconitase/IPM isomerase family. LeuC type 1 subfamily. Heterodimer of LeuC and LeuD. The cofactor is [4Fe-4S] cluster.

It carries out the reaction (2R,3S)-3-isopropylmalate = (2S)-2-isopropylmalate. It participates in amino-acid biosynthesis; L-leucine biosynthesis; L-leucine from 3-methyl-2-oxobutanoate: step 2/4. In terms of biological role, catalyzes the isomerization between 2-isopropylmalate and 3-isopropylmalate, via the formation of 2-isopropylmaleate. This is 3-isopropylmalate dehydratase large subunit from Pseudomonas syringae pv. syringae (strain B728a).